Here is a 212-residue protein sequence, read N- to C-terminus: NADH-quinone oxidoreductase subunit I (212 aa).

4Fe-4S ferredoxin-type domains lie at 76–105 (RLLESENERCIGCGLCEKICTSNCIRIITD) and 115–144 (LNYSINFGRCIYCGLCAEVCPELAIVHGDL). [4Fe-4S] cluster contacts are provided by cysteine 85, cysteine 88, cysteine 91, cysteine 95, cysteine 124, cysteine 127, cysteine 130, and cysteine 134.

The protein belongs to the complex I 23 kDa subunit family. In terms of assembly, NDH-1 is composed of 14 different subunits. Subunits NuoA, H, J, K, L, M, N constitute the membrane sector of the complex. [4Fe-4S] cluster is required as a cofactor.

It is found in the cell inner membrane. It carries out the reaction a quinone + NADH + 5 H(+)(in) = a quinol + NAD(+) + 4 H(+)(out). Functionally, NDH-1 shuttles electrons from NADH, via FMN and iron-sulfur (Fe-S) centers, to quinones in the respiratory chain. The immediate electron acceptor for the enzyme in this species is believed to be ubiquinone. Couples the redox reaction to proton translocation (for every two electrons transferred, four hydrogen ions are translocated across the cytoplasmic membrane), and thus conserves the redox energy in a proton gradient. The chain is NADH-quinone oxidoreductase subunit I from Helicobacter hepaticus (strain ATCC 51449 / 3B1).